We begin with the raw amino-acid sequence, 109 residues long: Cell division protein ZapA (109 aa).

The stretch at 22–99 (EQQDALNMAA…IEQALLEQGR (78 aa)) forms a coiled coil.

Belongs to the ZapA family. Type 1 subfamily. Homodimer. Interacts with FtsZ.

It localises to the cytoplasm. In terms of biological role, activator of cell division through the inhibition of FtsZ GTPase activity, therefore promoting FtsZ assembly into bundles of protofilaments necessary for the formation of the division Z ring. It is recruited early at mid-cell but it is not essential for cell division. This chain is Cell division protein ZapA, found in Yersinia pseudotuberculosis serotype O:1b (strain IP 31758).